The primary structure comprises 164 residues: MGEVRVVGIRVEQPQNQPVLLLREANGDRYLPIWIGQSEAAAIALEQQGVEPPRPLTHDLIRDLIAALGHSLKEVRIVDLQEGTFYADLIFDRNIKVSARPSDSVAIALRVGVPIYVEEAVLAQAGLLIPDESDEEATTAVREDEVEKFKEFLDSVSPDDFKAT.

Positions 1–129 constitute a BFN domain; it reads MGEVRVVGIR…AVLAQAGLLI (129 aa).

This is an uncharacterized protein from Mycobacterium tuberculosis (strain CDC 1551 / Oshkosh).